Here is a 293-residue protein sequence, read N- to C-terminus: ESX-3 secretion-associated protein EspG3 (293 aa).

Belongs to the EspG family.

Its subcellular location is the cytoplasm. This is ESX-3 secretion-associated protein EspG3 from Mycolicibacterium smegmatis (strain ATCC 700084 / mc(2)155) (Mycobacterium smegmatis).